Here is an 803-residue protein sequence, read N- to C-terminus: Leucine--tRNA ligase (803 aa).

Residues 40 to 51 carry the 'HIGH' region motif; the sequence is PYPSGAGLHVGH. Positions 575-579 match the 'KMSKS' region motif; the sequence is KMSKS. Residue Lys-578 coordinates ATP.

Belongs to the class-I aminoacyl-tRNA synthetase family.

It is found in the cytoplasm. It carries out the reaction tRNA(Leu) + L-leucine + ATP = L-leucyl-tRNA(Leu) + AMP + diphosphate. In Listeria monocytogenes serotype 4b (strain F2365), this protein is Leucine--tRNA ligase.